The following is a 457-amino-acid chain: Argininosuccinate lyase (457 aa).

It belongs to the lyase 1 family. Argininosuccinate lyase subfamily.

The protein resides in the cytoplasm. It carries out the reaction 2-(N(omega)-L-arginino)succinate = fumarate + L-arginine. It participates in amino-acid biosynthesis; L-arginine biosynthesis; L-arginine from L-ornithine and carbamoyl phosphate: step 3/3. The sequence is that of Argininosuccinate lyase from Escherichia coli O9:H4 (strain HS).